Consider the following 223-residue polypeptide: Capsid protein (223 aa).

A compositionally biased stretch (basic and acidic residues) spans 1–19 (MDDETKKLKNKNKETKEGD). Residues 1-21 (MDDETKKLKNKNKETKEGDDV) are disordered.

The protein belongs to the closteroviridae capsid protein family. In terms of processing, consists of at least two size variants, CP1 and CP2, which result of post-translational proteolysis at sites approximately 12 to 15 and 26 AA from the N-terminus respectively.

It localises to the virion. In Citrus tristeza virus (isolate T36) (CTV), this protein is Capsid protein.